The sequence spans 206 residues: Thymidylate kinase (206 aa).

ATP is bound at residue 10 to 17 (GNDGSGKS).

This sequence belongs to the thymidylate kinase family.

It carries out the reaction dTMP + ATP = dTDP + ADP. Phosphorylation of dTMP to form dTDP in both de novo and salvage pathways of dTTP synthesis. In Caldicellulosiruptor saccharolyticus (strain ATCC 43494 / DSM 8903 / Tp8T 6331), this protein is Thymidylate kinase.